Reading from the N-terminus, the 120-residue chain is Large ribosomal subunit protein uL24 (120 aa).

It belongs to the universal ribosomal protein uL24 family. As to quaternary structure, part of the 50S ribosomal subunit.

Its function is as follows. One of two assembly initiator proteins, it binds directly to the 5'-end of the 23S rRNA, where it nucleates assembly of the 50S subunit. Functionally, located at the polypeptide exit tunnel on the outside of the subunit. This is Large ribosomal subunit protein uL24 from Archaeoglobus fulgidus (strain ATCC 49558 / DSM 4304 / JCM 9628 / NBRC 100126 / VC-16).